Consider the following 254-residue polypeptide: Metalloprotease YcaL (254 aa).

The N-terminal stretch at 1 to 19 (MKNTKLLLAIATSAALLTG) is a signal peptide. Cysteine 20 carries N-palmitoyl cysteine lipidation. Cysteine 20 carries S-diacylglycerol cysteine lipidation. Histidine 134 contributes to the Zn(2+) binding site. Glutamate 135 is a catalytic residue. 2 residues coordinate Zn(2+): histidine 138 and glutamate 193. Positions 227–254 (GRTQSMFDSHPPSTERAQHIRDRIASGK) are disordered. Residues 242–254 (RAQHIRDRIASGK) show a composition bias toward basic and acidic residues.

It belongs to the peptidase M48B family. Zn(2+) serves as cofactor.

The protein resides in the cell inner membrane. Functionally, involved in the degradation of the LPS-assembly protein LptD. Degrades LptD that have engaged the Bam complex but are stalled at an early step in the outer membrane protein assembly process. The chain is Metalloprotease YcaL (ycaL) from Escherichia coli (strain K12).